The chain runs to 353 residues: UPF0283 membrane protein YcjF (353 aa).

Over residues 1–19 (MSEPLKPRIDFAEPLKEEP) the composition is skewed to basic and acidic residues. Residues 1–35 (MSEPLKPRIDFAEPLKEEPTSAFKAQQTFSEAESR) form a disordered region. The next 3 membrane-spanning stretches (helical) occupy residues 70-90 (MVMGGLALFGASVVGQGVQWT), 100-120 (VALGGCAAGALIIGAGVGSVV), and 213-233 (ESTLMIAVSSLALVDMAFIAW).

Belongs to the UPF0283 family.

It localises to the cell inner membrane. The polypeptide is UPF0283 membrane protein YcjF (Salmonella gallinarum (strain 287/91 / NCTC 13346)).